Reading from the N-terminus, the 295-residue chain is Perivine-Nbeta-methyltransferase (295 aa).

An SAM motif I region spans residues 76–85; that stretch reads ILDVGCGKGG. The short motif at 138–144 is the Vacuolar targeting signal element; that stretch reads DGSFELI. The SAM motif II stretch occupies residues 139–147; that stretch reads GSFELIFVI. Positions 166-175 are SAM motif III; the sequence is VAAPGAQIVI.

It belongs to the class I-like SAM-binding methyltransferase superfamily. gTMT family. As to quaternary structure, homodimer. In terms of tissue distribution, mainly expressed in young leaves, and, to a lower extent, in mature leaves, flowers, stems and roots (at protein level). Transcripts levels are highest in flowers, moderate in leaves and low in roots and stems.

It localises to the vacuole membrane. The catalysed reaction is perivine + S-adenosyl-L-methionine = vobasine + S-adenosyl-L-homocysteine + 2 H(+). It participates in alkaloid biosynthesis; vindoline biosynthesis. Functionally, S-adenosyl-L-methionine-dependent N-methyltransferase involved in the biosynthesis of biologically active monoterpenoid indole alkaloids (MIAs) natural products including vindoline. Catalyzes the conversion of perivine to Nbeta-methylperivine (vobasine) by methylating its N4 nitrogen. Inactive with picrinine as substrate. The sequence is that of Perivine-Nbeta-methyltransferase from Catharanthus roseus (Madagascar periwinkle).